A 271-amino-acid polypeptide reads, in one-letter code: Elongation factor Ts (271 aa).

Residues 76–79 form an involved in Mg(2+) ion dislocation from EF-Tu region; it reads TDFV.

Belongs to the EF-Ts family.

The protein localises to the cytoplasm. Its function is as follows. Associates with the EF-Tu.GDP complex and induces the exchange of GDP to GTP. It remains bound to the aminoacyl-tRNA.EF-Tu.GTP complex up to the GTP hydrolysis stage on the ribosome. The protein is Elongation factor Ts of Mycobacterium ulcerans (strain Agy99).